The sequence spans 568 residues: Potassium-transporting ATPase potassium-binding subunit (568 aa).

10 helical membrane-spanning segments follow: residues 1–21 (MWLT…LAVP), 60–80 (GLAL…LLRA), 129–149 (AITF…AGFI), 174–194 (VMLP…VPQA), 251–271 (IHIL…GSML), 278–298 (WVLF…VFTA), 381–401 (VGLI…GMMI), 420–440 (VMLA…LAAV), 488–508 (IGLA…ALAG), and 528–548 (PLFM…TFLP).

It belongs to the KdpA family. In terms of assembly, the system is composed of three essential subunits: KdpA, KdpB and KdpC.

It is found in the cell inner membrane. In terms of biological role, part of the high-affinity ATP-driven potassium transport (or Kdp) system, which catalyzes the hydrolysis of ATP coupled with the electrogenic transport of potassium into the cytoplasm. This subunit binds the periplasmic potassium ions and delivers the ions to the membrane domain of KdpB through an intramembrane tunnel. The polypeptide is Potassium-transporting ATPase potassium-binding subunit (Delftia acidovorans (strain DSM 14801 / SPH-1)).